A 182-amino-acid chain; its full sequence is Nucleoid-associated protein At2g24020, chloroplastic (182 aa).

The transit peptide at 1 to 48 (MASMAATTNFTKSMLFPFSHVSGNASLNSQRRTWPKQYKSKNGYRSLR) directs the protein to the chloroplast.

This sequence belongs to the YbaB/EbfC family. As to quaternary structure, homodimer. Interacts with ALB3 and ALB4.

The protein localises to the plastid. Its subcellular location is the chloroplast stroma. Its function is as follows. Participates with ALB4 in thylakoid protein targeting. May function with specific subset of thylakoidal proteins. Binds to DNA and alters its conformation. May be involved in regulation of gene expression, nucleoid organization and DNA protection. The chain is Nucleoid-associated protein At2g24020, chloroplastic from Arabidopsis thaliana (Mouse-ear cress).